The primary structure comprises 265 residues: 4-hydroxy-tetrahydrodipicolinate reductase (265 aa).

Residues 7 to 12 (GASGRM) and aspartate 33 each bind NAD(+). An NADP(+)-binding site is contributed by arginine 34. Residues 96–98 (GTT) and 120–123 (AANM) each bind NAD(+). Histidine 153 (proton donor/acceptor) is an active-site residue. Histidine 154 provides a ligand contact to (S)-2,3,4,5-tetrahydrodipicolinate. Lysine 157 acts as the Proton donor in catalysis. 163 to 164 (GT) contacts (S)-2,3,4,5-tetrahydrodipicolinate.

It belongs to the DapB family.

It is found in the cytoplasm. The catalysed reaction is (S)-2,3,4,5-tetrahydrodipicolinate + NAD(+) + H2O = (2S,4S)-4-hydroxy-2,3,4,5-tetrahydrodipicolinate + NADH + H(+). It carries out the reaction (S)-2,3,4,5-tetrahydrodipicolinate + NADP(+) + H2O = (2S,4S)-4-hydroxy-2,3,4,5-tetrahydrodipicolinate + NADPH + H(+). Its pathway is amino-acid biosynthesis; L-lysine biosynthesis via DAP pathway; (S)-tetrahydrodipicolinate from L-aspartate: step 4/4. Catalyzes the conversion of 4-hydroxy-tetrahydrodipicolinate (HTPA) to tetrahydrodipicolinate. This is 4-hydroxy-tetrahydrodipicolinate reductase from Burkholderia lata (strain ATCC 17760 / DSM 23089 / LMG 22485 / NCIMB 9086 / R18194 / 383).